The sequence spans 318 residues: MSFRLQPPPPARPNRCQLFGPGSRPALFEKMAASAADVVNLDLEDSVAPDDKAQARLNIIEAINTLDWGKKYLSVRINGLDTPFWYRDVVDLLEQAGDRLDQIMIPKVGCAADVYAVDALVTAIERAKGRTKPVSFEVIIESAAGIAHVEEIAAASPRLQAMSLGAADFAASMGMQTTGIGGTQENYYMLHEGQKHWSDPWHWAQAAIVAACRTHGILPVDGPFGDFSDDEGFRAQARRSATLGMVGKWAIHPKQVALANEVFTPSDKAVAEAREILAAMEAAKARGEGATVYKGRLVDIASIKQAEVIVRQAEMISA.

Phe-19, Arg-24, Lys-30, and Arg-76 together coordinate substrate. Mg(2+)-binding residues include Glu-141 and Asp-168. Substrate is bound by residues 167–168 (AD) and 251–252 (IH).

It belongs to the HpcH/HpaI aldolase family. As to quaternary structure, homohexamer. Dimer of trimers. The cofactor is Mg(2+). Mn(2+) serves as cofactor.

The enzyme catalyses (S)-malyl-CoA = glyoxylate + acetyl-CoA. It carries out the reaction (2R,3S)-beta-methylmalyl-CoA = propanoyl-CoA + glyoxylate. Involved in the ethylmalonyl-CoA pathway for acetate assimilation. Catalyzes the reversible condensation of glyoxylate and acetyl-CoA to L-malyl-CoA and the reversible condensation of glyoxylate and propionyl-CoA to yield beta-methylmalyl-CoA. This Cereibacter sphaeroides (strain ATCC 17025 / ATH 2.4.3) (Rhodobacter sphaeroides) protein is L-malyl-CoA/beta-methylmalyl-CoA lyase.